A 910-amino-acid chain; its full sequence is DNA mismatch repair protein MutS (910 aa).

Over residues 1–15 (MPRSAAQSEEQTLQG) the composition is skewed to polar residues. The segment at 1-94 (MPRSAAQSEE…EPAWAHHSQV (94 aa)) is disordered. The span at 44 to 54 (DASLSADAAAR) shows a compositional bias: low complexity. ATP is bound at residue 726–733 (GPNASGKS).

Belongs to the DNA mismatch repair MutS family.

This protein is involved in the repair of mismatches in DNA. It is possible that it carries out the mismatch recognition step. This protein has a weak ATPase activity. The chain is DNA mismatch repair protein MutS from Synechococcus sp. (strain WH7803).